Here is a 227-residue protein sequence, read N- to C-terminus: Peroxiredoxin 1 (227 aa).

A Thioredoxin domain is found at 6-161; the sequence is PLIGEKFPEM…ILRLIKSLQM (156 aa). Cys48 (cysteine sulfenic acid (-SOH) intermediate) is an active-site residue. A substrate-binding site is contributed by Arg124.

The protein belongs to the peroxiredoxin family. Prx6 subfamily. Homodecamer. Pentamer of dimers that assemble into a ring structure.

Its subcellular location is the cytoplasm. It carries out the reaction a hydroperoxide + [thioredoxin]-dithiol = an alcohol + [thioredoxin]-disulfide + H2O. In terms of biological role, thiol-specific peroxidase that catalyzes the reduction of hydrogen peroxide and organic hydroperoxides to water and alcohols, respectively. Plays a role in cell protection against oxidative stress by detoxifying peroxides. The chain is Peroxiredoxin 1 from Picrophilus torridus (strain ATCC 700027 / DSM 9790 / JCM 10055 / NBRC 100828 / KAW 2/3).